A 307-amino-acid chain; its full sequence is Aspartate carbamoyltransferase catalytic subunit (307 aa).

Carbamoyl phosphate is bound by residues arginine 54 and threonine 55. Lysine 83 provides a ligand contact to L-aspartate. Carbamoyl phosphate is bound by residues arginine 104, histidine 132, and glutamine 135. L-aspartate-binding residues include arginine 165 and arginine 228. Carbamoyl phosphate is bound by residues leucine 267 and proline 268.

The protein belongs to the aspartate/ornithine carbamoyltransferase superfamily. ATCase family. In terms of assembly, heterododecamer (2C3:3R2) of six catalytic PyrB chains organized as two trimers (C3), and six regulatory PyrI chains organized as three dimers (R2).

It catalyses the reaction carbamoyl phosphate + L-aspartate = N-carbamoyl-L-aspartate + phosphate + H(+). It functions in the pathway pyrimidine metabolism; UMP biosynthesis via de novo pathway; (S)-dihydroorotate from bicarbonate: step 2/3. Catalyzes the condensation of carbamoyl phosphate and aspartate to form carbamoyl aspartate and inorganic phosphate, the committed step in the de novo pyrimidine nucleotide biosynthesis pathway. The chain is Aspartate carbamoyltransferase catalytic subunit from Clostridium perfringens (strain SM101 / Type A).